A 240-amino-acid chain; its full sequence is Probable transcriptional regulatory protein YrbC (240 aa).

This sequence belongs to the TACO1 family.

Its subcellular location is the cytoplasm. The chain is Probable transcriptional regulatory protein YrbC (yrbC) from Bacillus subtilis (strain 168).